The following is a 325-amino-acid chain: DNA-directed RNA polymerase subunit alpha (325 aa).

The alpha N-terminal domain (alpha-NTD) stretch occupies residues 1–238 (MSLKSLLKGF…EHLTVFINFE (238 aa)). Residues 255-325 (LKASLSKHVE…LGLSFGMRDF (71 aa)) are alpha C-terminal domain (alpha-CTD).

It belongs to the RNA polymerase alpha chain family. As to quaternary structure, homodimer. The RNAP catalytic core consists of 2 alpha, 1 beta, 1 beta' and 1 omega subunit. When a sigma factor is associated with the core the holoenzyme is formed, which can initiate transcription.

The catalysed reaction is RNA(n) + a ribonucleoside 5'-triphosphate = RNA(n+1) + diphosphate. Functionally, DNA-dependent RNA polymerase catalyzes the transcription of DNA into RNA using the four ribonucleoside triphosphates as substrates. The protein is DNA-directed RNA polymerase subunit alpha of Leptospira interrogans serogroup Icterohaemorrhagiae serovar copenhageni (strain Fiocruz L1-130).